The chain runs to 462 residues: Bindin (462 aa).

The signal sequence occupies residues 1–19 (MARQLSVILVALTLTTALA). Positions 20–244 (ENFPTRTSAP…DSGRSARKKR (225 aa)) are excised as a propeptide. 2 disordered regions span residues 155–194 (DDRR…APKD) and 221–278 (RTRR…QGMG). Residues 372 to 380 (LRHLRHHSN) form a fucose-binding domain region.

Belongs to the bindin family.

Its subcellular location is the cytoplasmic vesicle. It is found in the secretory vesicle. It localises to the acrosome lumen. Functionally, species-specific sea urchin sperm protein required for adhesion of sperm to the egg surface during fertilization. Bindin coats the acrosomal process after it is externalized by the acrosome reaction. It binds to sulfated, fucose-containing polysaccharides on the vitelline layer receptor proteoglycans which cover the egg plasma membrane. The polypeptide is Bindin (Lytechinus variegatus (Green sea urchin)).